We begin with the raw amino-acid sequence, 78 residues long: Large ribosomal subunit protein bL28 (78 aa).

The tract at residues 1–21 is disordered; it reads MSRVCQVTGKRPVSGNNRSHA.

This sequence belongs to the bacterial ribosomal protein bL28 family.

The sequence is that of Large ribosomal subunit protein bL28 from Serratia proteamaculans (strain 568).